The sequence spans 1168 residues: Homeodomain-interacting protein kinase 2 (1168 aa).

Position 16 is a phosphoserine (Ser16). Residue Lys32 forms a Glycyl lysine isopeptide (Lys-Gly) (interchain with G-Cter in SUMO); alternate linkage. Lys32 is covalently cross-linked (Glycyl lysine isopeptide (Lys-Gly) (interchain with G-Cter in SUMO2); alternate). The interval 97 to 230 (SASSTSVTGQ…TNEIVAIKIL (134 aa)) is transcriptional corepression. A phosphoserine mark is found at Ser118 and Ser135. At Thr141 the chain carries Phosphothreonine. An interaction with DAXX region spans residues 189 to 520 (HEVLCSMTNT…DADKRITPIE (332 aa)). In terms of domain architecture, Protein kinase spans 199-527 (YEVLEFLGRG…PIETLNHPFV (329 aa)). Residues 205–213 (LGRGTFGQV) and Lys228 each bind ATP. 2 positions are modified to phosphothreonine: Thr252 and Thr273. The active-site Proton acceptor is the Asp324. Phosphotyrosine is present on Tyr361. The residue at position 441 (Ser441) is a Phosphoserine. A phosphothreonine mark is found at Thr482, Thr517, and Thr566. Residues 539–816 (THVKSCFQNM…KENTPPRCAM (278 aa)) form an interaction with SKI and SMAD1 region. Residues 595–772 (PSAASMAAVA…MRQQPTSTTS (178 aa)) are interaction with DAZAP2. Residues Ser607 and Ser641 each carry the phosphoserine modification. Phosphothreonine is present on Thr660. Positions 724-869 (RNTHAHGSHY…ITISSDTDEE (146 aa)) are interaction with POU4F1. Residues 746–848 (HVTLPAAQPL…TRERQRQTIV (103 aa)) form an interaction with CTBP1 region. Residues 759–869 (VAHVMRQQPT…ITISSDTDEE (111 aa)) are interaction with HMGA1. The disordered stretch occupies residues 764-820 (RQQPTSTTSSRKSKQHQPSMRNVSTCEVTSSQSTSSPQRSKRVKENTPPRCAMVHSS). The segment covering 765 to 791 (QQPTSTTSSRKSKQHQPSMRNVSTCEV) has biased composition (polar residues). The Nuclear localization signal 1 (NLS1) motif lies at 774–777 (RKSK). Phosphoserine occurs at positions 787 and 799. Residues 792 to 801 (TSSQSTSSPQ) show a composition bias toward low complexity. The short motif at 804 to 807 (KRVK) is the Nuclear localization signal 2 (NLS2) element. The tract at residues 812 to 907 (PRCAMVHSSP…YSDSSSNTSP (96 aa)) is interaction with TP53 and TP73. Residues 845 to 879 (QTIVIPDTPSPTVSVITISSDTDEEEEQKHAPTST) form an interaction with UBE2I region. The interval 845–952 (QTIVIPDTPS…PLKTQASEVL (108 aa)) is localization to nuclear speckles. Residues 845–952 (QTIVIPDTPS…PLKTQASEVL (108 aa)) are required for localization to nuclear speckles. The interval 854 to 876 (SPTVSVITISSDTDEEEEQKHAP) is interaction with UBL1. Residues 856–880 (TVSVITISSDTDEEEEQKHAPTSTV) form an SUMO interaction motifs (SIM); required for nuclear localization and kinase activity region. Residues 894–936 (HDSPYSDSSSNTSPYSVQQRTGHNGTNTLDTKGALENHCTGNP) form a disordered region. A compositionally biased stretch (low complexity) spans 895–909 (DSPYSDSSSNTSPYS). Ser906 carries the phosphoserine modification. An interaction with AXIN1 region spans residues 907-1022 (PYSVQQRTGH…LSQAQPHMAT (116 aa)). Residues 910–923 (VQQRTGHNGTNTLD) show a composition bias toward polar residues. Glycyl lysine isopeptide (Lys-Gly) (interchain with G-Cter in SUMO2) cross-links involve residues Lys925 and Lys945. The segment at 956–1168 (DSLGPAVSTG…PAKVNQYPYI (213 aa)) is autoinhibitory domain (AID). Positions 960–1030 (PAVSTGHHSS…ATDRTGSHRR (71 aa)) are disordered. Ser963 is modified (phosphoserine). Low complexity-rich tracts occupy residues 965-991 (GHHSSSFKCKSSSTVTSTSGHSSGSSS) and 998-1018 (QQRPGPHFQQQQPLNLSQAQP). Residues Ser1014, Ser1125, and Ser1158 each carry the phosphoserine modification. Residue Lys1161 forms a Glycyl lysine isopeptide (Lys-Gly) (interchain with G-Cter in SUMO) linkage.

It belongs to the protein kinase superfamily. CMGC Ser/Thr protein kinase family. HIPK subfamily. In terms of assembly, interacts with CREB1, SIAH1, WSB1, CBX4, TRADD, p53/TP53, TP73, TP63, CREBBP, DAXX, P53DINP1, SKI, SMAD1, SMAD2 and SMAD3, but not SMAD4. Interacts with ATF1, PML, RUNX1, EP300, NKX1-2, NKX2-5, UBE2I, HMGA1, CTBP1, AXIN1, NLK, MYB, POU4F1, POU4F2, POU4F3, UBE2I, UBL1 and ZBTB4. Probably part of a complex consisting of p53/TP53, HIPK2 and AXIN1. Interacts with SP100; positively regulates TP53-dependent transcription. Interacts with DAZAP2; the interaction results in phosphorylation of DAZAP2 which causes localization of DAZAP2 to the nucleus, reduces interaction of DAZAP2 with HIPK2 and prevents DAZAP2-dependent degradation of HIPK2. Interacts with SIAH1; the interaction is promoted by DAZAP2 and results in SIAH1-mediated ubiquitination and subsequent proteasomal degradation of HIPK2. In terms of processing, autophosphorylation at Tyr-361 in the activation loop activates the kinase and promotes nuclear localization. Post-translationally, sumoylated. When conjugated it is directed to nuclear speckles. Desumoylated by SENP1. Sumoylation on Lys-32 is promoted by the E3 SUMO-protein ligase CBX4. Ubiquitinated by FBXO3, WSB1 and SIAH1, leading to rapid proteasome-dependent degradation. The degradation mediated by FBXO3, but not ubiquitination, is prevented in the presence of PML. The degradation mediated by WSB1 and SIAH1 is reversibly reduced upon DNA damage. In terms of processing, cleaved at Asp-895 and Asp-956 by CASP6 in a p53/TP53-dependent manner. The cleaved form lacks the autoinhibitory C-terminal domain (AID), resulting in a hyperactive kinase, which potentiates p53/TP53 Ser-46 phosphorylation and subsequent activation of the cell death machinery.

It localises to the nucleus. It is found in the PML body. Its subcellular location is the cytoplasm. It carries out the reaction L-seryl-[protein] + ATP = O-phospho-L-seryl-[protein] + ADP + H(+). The catalysed reaction is L-threonyl-[protein] + ATP = O-phospho-L-threonyl-[protein] + ADP + H(+). Functionally, serine/threonine-protein kinase involved in transcription regulation, p53/TP53-mediated cellular apoptosis and regulation of the cell cycle. Acts as a corepressor of several transcription factors, including SMAD1 and POU4F1/Brn3a and probably NK homeodomain transcription factors. Phosphorylates PDX1, ATF1, PML, p53/TP53, CREB1, CTBP1, CBX4, RUNX1, EP300, CTNNB1, HMGA1, ZBTB4 and DAZAP2. Inhibits cell growth and promotes apoptosis through the activation of p53/TP53 both at the transcription level and at the protein level (by phosphorylation and indirect acetylation). The phosphorylation of p53/TP53 may be mediated by a p53/TP53-HIPK2-AXIN1 complex. Involved in the response to hypoxia by acting as a transcriptional co-suppressor of HIF1A. Mediates transcriptional activation of TP73. In response to TGFB, cooperates with DAXX to activate JNK. Negative regulator through phosphorylation and subsequent proteasomal degradation of CTNNB1 and the antiapoptotic factor CTBP1. In the Wnt/beta-catenin signaling pathway acts as an intermediate kinase between MAP3K7/TAK1 and NLK to promote the proteasomal degradation of MYB. Phosphorylates CBX4 upon DNA damage and promotes its E3 SUMO-protein ligase activity. Activates CREB1 and ATF1 transcription factors by phosphorylation in response to genotoxic stress. In response to DNA damage, stabilizes PML by phosphorylation. PML, HIPK2 and FBXO3 may act synergically to activate p53/TP53-dependent transactivation. Promotes angiogenesis, and is involved in erythroid differentiation, especially during fetal liver erythropoiesis. Phosphorylation of RUNX1 and EP300 stimulates EP300 transcription regulation activity. Triggers ZBTB4 protein degradation in response to DNA damage. In response to DNA damage, phosphorylates DAZAP2 which localizes DAZAP2 to the nucleus, reduces interaction of DAZAP2 with HIPK2 and prevents DAZAP2-dependent ubiquitination of HIPK2 by E3 ubiquitin-protein ligase SIAH1 and subsequent proteasomal degradation. Modulates HMGA1 DNA-binding affinity. In response to high glucose, triggers phosphorylation-mediated subnuclear localization shifting of PDX1. Involved in the regulation of eye size, lens formation and retinal lamination during late embryogenesis. The polypeptide is Homeodomain-interacting protein kinase 2 (Hipk2) (Mesocricetus auratus (Golden hamster)).